The sequence spans 87 residues: Acyl-CoA-binding protein (87 aa).

N-acetylserine is present on Ser2. In terms of domain architecture, ACB spans 2–87 (SQAEFDKAAE…VEELKKKYGI (86 aa)). Lys8 is modified (N6-acetyllysine; alternate). Lys8 bears the N6-succinyllysine; alternate mark. Lys14 contributes to the an acyl-CoA binding site. Position 17 is an N6-succinyllysine (Lys17). Lys19 bears the N6-acetyllysine mark. At Tyr29 the chain carries Phosphotyrosine. Residues 29–33 (YSHYK), Lys51, Lys55, and Tyr74 contribute to the an acyl-CoA site. Lys51 carries the N6-acetyllysine modification. Lys55 carries the post-translational modification N6-acetyllysine; alternate. Residue Lys55 is modified to N6-succinyllysine; alternate. Position 55 is an N6-(2-hydroxyisobutyryl)lysine; alternate (Lys55). Residue Lys55 is modified to N6-malonyllysine; alternate. Lys77 is subject to N6-acetyllysine; alternate. Position 77 is an N6-succinyllysine; alternate (Lys77).

This sequence belongs to the ACBP family. In terms of assembly, monomer.

Its subcellular location is the endoplasmic reticulum. It localises to the golgi apparatus. In terms of biological role, binds medium- and long-chain acyl-CoA esters with very high affinity and may function as an intracellular carrier of acyl-CoA esters. The sequence is that of Acyl-CoA-binding protein (DBI) from Chaetophractus villosus (South American armadillo).